The sequence spans 325 residues: MDGSNVTSFVVEEPTNISTGRNASVGNAHRQIPIVHWVIMSISPVGFVENGILLWFLCFRMRRNPFTVYITHLSIADISLLFCIFILSIDYALDYELSSGHYYTIVTLSVTFLFGYNTGLYLLTAISVERCLSVLYPIWYRCHRPKYQSALVCALLWALSCLVTTMEYVMCIDREEESHSRNDCRAVIIFIAILSFLVFTPLMLVSSTILVVKIRKNTWASHSSKLYIVIMVTIIIFLIFAMPMRLLYLLYYEYWSTFGNLHHISLLFSTINSSANPFIYFFVGSSKKKRFKESLKVVLTRAFKDEMQPRRQKDNCNTVTVETVV.

The Extracellular segment spans residues 1–36 (MDGSNVTSFVVEEPTNISTGRNASVGNAHRQIPIVH). 3 N-linked (GlcNAc...) asparagine glycosylation sites follow: N5, N16, and N22. The helical transmembrane segment at 37-61 (WVIMSISPVGFVENGILLWFLCFRM) threads the bilayer. Over 62–65 (RRNP) the chain is Cytoplasmic. A helical transmembrane segment spans residues 66 to 86 (FTVYITHLSIADISLLFCIFI). Topologically, residues 87-104 (LSIDYALDYELSSGHYYT) are extracellular. A helical membrane pass occupies residues 105–128 (IVTLSVTFLFGYNTGLYLLTAISV). The Cytoplasmic portion of the chain corresponds to 129-149 (ERCLSVLYPIWYRCHRPKYQS). The helical transmembrane segment at 150 to 172 (ALVCALLWALSCLVTTMEYVMCI) threads the bilayer. Residues 173–185 (DREEESHSRNDCR) lie on the Extracellular side of the membrane. The chain crosses the membrane as a helical span at residues 186 to 206 (AVIIFIAILSFLVFTPLMLVS). The Cytoplasmic segment spans residues 207-224 (STILVVKIRKNTWASHSS). A helical transmembrane segment spans residues 225-245 (KLYIVIMVTIIIFLIFAMPMR). Residues 246–263 (LLYLLYYEYWSTFGNLHH) are Extracellular-facing. The chain crosses the membrane as a helical span at residues 264-284 (ISLLFSTINSSANPFIYFFVG). Over 285 to 325 (SSKKKRFKESLKVVLTRAFKDEMQPRRQKDNCNTVTVETVV) the chain is Cytoplasmic.

It belongs to the G-protein coupled receptor 1 family. Interacts with AGTR1. Interacts with FLNA (via filamin repeat 21); increases PKA-mediated phosphorylation of FLNA.

It localises to the cell membrane. Functionally, receptor for angiotensin 1-7. Acts specifically as a functional antagonist of AGTR1 (angiotensin-2 type 1 receptor), although it up-regulates AGTR1 receptor levels. Positive regulation of AGTR1 levels occurs through activation of the G-proteins GNA11 and GNAQ, and stimulation of the protein kinase C signaling cascade. The antagonist effect on AGTR1 function is probably due to AGTR1 being physically altered by MAS1. In Homo sapiens (Human), this protein is Proto-oncogene Mas (MAS1).